The sequence spans 209 residues: Uracil phosphoribosyltransferase (209 aa).

Residues Arg79, Arg104, and 131-139 (DPMLATGGS) contribute to the 5-phospho-alpha-D-ribose 1-diphosphate site. Uracil is bound by residues Ile194 and 199–201 (GDA). A 5-phospho-alpha-D-ribose 1-diphosphate-binding site is contributed by Asp200.

This sequence belongs to the UPRTase family. Mg(2+) is required as a cofactor.

It catalyses the reaction UMP + diphosphate = 5-phospho-alpha-D-ribose 1-diphosphate + uracil. It participates in pyrimidine metabolism; UMP biosynthesis via salvage pathway; UMP from uracil: step 1/1. Allosterically activated by GTP. In terms of biological role, catalyzes the conversion of uracil and 5-phospho-alpha-D-ribose 1-diphosphate (PRPP) to UMP and diphosphate. This chain is Uracil phosphoribosyltransferase, found in Clostridium acetobutylicum (strain ATCC 824 / DSM 792 / JCM 1419 / IAM 19013 / LMG 5710 / NBRC 13948 / NRRL B-527 / VKM B-1787 / 2291 / W).